Reading from the N-terminus, the 32-residue chain is Glutathione S-transferase 8.2 (32 aa).

21 to 22 contributes to the glutathione binding site; the sequence is QS.

The protein belongs to the GST superfamily. Alpha family. Homodimer. In terms of processing, the N-terminus is blocked.

The protein localises to the cytoplasm. It carries out the reaction RX + glutathione = an S-substituted glutathione + a halide anion + H(+). Functionally, conjugation of reduced glutathione to a wide number of exogenous and endogenous hydrophobic electrophiles. This Dicentrarchus labrax (European seabass) protein is Glutathione S-transferase 8.2.